A 385-amino-acid chain; its full sequence is cAMP-dependent protein kinase regulatory subunit (385 aa).

The segment covering 1 to 22 (MSSTGFTSPFGNANPFGSSGRS) has biased composition (polar residues). 2 disordered regions span residues 1–51 (MSST…GVKN) and 77–111 (DFPA…PVHP). Residues 1–128 (MSSTGFTSPF…RLKKAISGNF (128 aa)) form a dimerization and phosphorylation region. A Phosphoserine modification is found at Ser89. 3',5'-cyclic AMP-binding positions include 129–260 (LFNH…EEVP), Glu207, Arg216, 261–378 (ILKT…EAEE), Glu328, and Arg337.

This sequence belongs to the cAMP-dependent kinase regulatory chain family. Tetramer, composed of 2 regulatory (R) and 2 catalytic (C) subunits. In the presence of cAMP it dissociates into 2 active monomeric C subunits and an R dimer.

This chain is cAMP-dependent protein kinase regulatory subunit (mcb), found in Neurospora crassa (strain ATCC 24698 / 74-OR23-1A / CBS 708.71 / DSM 1257 / FGSC 987).